A 229-amino-acid chain; its full sequence is UPF0173 metal-dependent hydrolase Hbut_0886 (229 aa).

Belongs to the UPF0173 family.

The sequence is that of UPF0173 metal-dependent hydrolase Hbut_0886 from Hyperthermus butylicus (strain DSM 5456 / JCM 9403 / PLM1-5).